The primary structure comprises 127 residues: Cytochrome c2 (127 aa).

A signal peptide spans 1–20 (MRKLVFGLFVLAASVAPAAA). The residue at position 21 (Gln-21) is a Pyrrolidone carboxylic acid. Residues Cys-33, Cys-36, His-37, and Met-99 each coordinate heme c.

The protein belongs to the cytochrome c family. Binds 1 heme c group covalently per subunit.

In terms of biological role, cytochrome c2 is found mainly in purple, non-sulfur, photosynthetic bacteria where it functions as the electron donor to the oxidized bacteriochlorophyll in the photophosphorylation pathway. However, it may also have a role in the respiratory chain and is found in some non-photosynthetic bacteria. This is Cytochrome c2 (cycA) from Blastochloris viridis (Rhodopseudomonas viridis).